Reading from the N-terminus, the 240-residue chain is Orotidine 5'-phosphate decarboxylase (240 aa).

Substrate-binding positions include Asp16, Lys37, 64–73, Thr128, Arg190, Gln199, Gly219, and Arg220; that span reads DLKFHDIPTT. The active-site Proton donor is Lys66.

This sequence belongs to the OMP decarboxylase family. Type 1 subfamily. As to quaternary structure, homodimer.

It catalyses the reaction orotidine 5'-phosphate + H(+) = UMP + CO2. The protein operates within pyrimidine metabolism; UMP biosynthesis via de novo pathway; UMP from orotate: step 2/2. Catalyzes the decarboxylation of orotidine 5'-monophosphate (OMP) to uridine 5'-monophosphate (UMP). This chain is Orotidine 5'-phosphate decarboxylase, found in Prochlorococcus marinus (strain SARG / CCMP1375 / SS120).